A 322-amino-acid polypeptide reads, in one-letter code: Ferrochelatase (322 aa).

2 residues coordinate Fe cation: H195 and E276.

It belongs to the ferrochelatase family.

The protein resides in the cytoplasm. It carries out the reaction heme b + 2 H(+) = protoporphyrin IX + Fe(2+). It functions in the pathway porphyrin-containing compound metabolism; protoheme biosynthesis; protoheme from protoporphyrin-IX: step 1/1. Catalyzes the ferrous insertion into protoporphyrin IX. This Edwardsiella ictaluri (strain 93-146) protein is Ferrochelatase.